The following is a 148-amino-acid chain: uncharacterized protein (148 aa).

This is an uncharacterized protein from Bacillus subtilis (Bacteriophage SP01).